The primary structure comprises 430 residues: Glutamate-1-semialdehyde 2,1-aminomutase (430 aa).

An N6-(pyridoxal phosphate)lysine modification is found at lysine 267.

Belongs to the class-III pyridoxal-phosphate-dependent aminotransferase family. HemL subfamily. As to quaternary structure, homodimer. The cofactor is pyridoxal 5'-phosphate.

The protein localises to the cytoplasm. The enzyme catalyses (S)-4-amino-5-oxopentanoate = 5-aminolevulinate. The protein operates within porphyrin-containing compound metabolism; protoporphyrin-IX biosynthesis; 5-aminolevulinate from L-glutamyl-tRNA(Glu): step 2/2. The protein is Glutamate-1-semialdehyde 2,1-aminomutase of Desulfotalea psychrophila (strain LSv54 / DSM 12343).